Here is a 178-residue protein sequence, read N- to C-terminus: NADH-quinone oxidoreductase subunit B 1 (178 aa).

[4Fe-4S] cluster is bound by residues Cys-39, Cys-40, Cys-104, and Cys-135.

The protein belongs to the complex I 20 kDa subunit family. NDH-1 is composed of 14 different subunits. Subunits NuoB, C, D, E, F, and G constitute the peripheral sector of the complex. [4Fe-4S] cluster serves as cofactor.

Its subcellular location is the cell inner membrane. The enzyme catalyses a quinone + NADH + 5 H(+)(in) = a quinol + NAD(+) + 4 H(+)(out). In terms of biological role, NDH-1 shuttles electrons from NADH, via FMN and iron-sulfur (Fe-S) centers, to quinones in the respiratory chain. The immediate electron acceptor for the enzyme in this species is believed to be a menaquinone. Couples the redox reaction to proton translocation (for every two electrons transferred, four hydrogen ions are translocated across the cytoplasmic membrane), and thus conserves the redox energy in a proton gradient. In Cytophaga hutchinsonii (strain ATCC 33406 / DSM 1761 / CIP 103989 / NBRC 15051 / NCIMB 9469 / D465), this protein is NADH-quinone oxidoreductase subunit B 1.